A 437-amino-acid polypeptide reads, in one-letter code: Adenylosuccinate synthetase (437 aa).

Residues 13–19 (GDEGKGK) and 41–43 (GHT) each bind GTP. Aspartate 14 serves as the catalytic Proton acceptor. Mg(2+) contacts are provided by aspartate 14 and glycine 41. IMP contacts are provided by residues 14-17 (DEGK), 39-42 (NAGH), threonine 130, arginine 144, glutamine 225, threonine 240, and arginine 310. Residue histidine 42 is the Proton donor of the active site. 306 to 312 (ATTGRLR) lines the substrate pocket. Residues arginine 312, 338 to 340 (KLD), and 421 to 423 (STG) each bind GTP.

This sequence belongs to the adenylosuccinate synthetase family. As to quaternary structure, homodimer. The cofactor is Mg(2+).

Its subcellular location is the cytoplasm. It carries out the reaction IMP + L-aspartate + GTP = N(6)-(1,2-dicarboxyethyl)-AMP + GDP + phosphate + 2 H(+). It participates in purine metabolism; AMP biosynthesis via de novo pathway; AMP from IMP: step 1/2. Functionally, plays an important role in the de novo pathway of purine nucleotide biosynthesis. Catalyzes the first committed step in the biosynthesis of AMP from IMP. The protein is Adenylosuccinate synthetase of Psychromonas ingrahamii (strain DSM 17664 / CCUG 51855 / 37).